A 119-amino-acid chain; its full sequence is Protein phosphatase EYA4 (119 aa).

It belongs to the HAD-like hydrolase superfamily. EYA family. Mg(2+) is required as a cofactor.

The protein resides in the cytoplasm. The protein localises to the nucleus. The enzyme catalyses O-phospho-L-tyrosyl-[protein] + H2O = L-tyrosyl-[protein] + phosphate. Functionally, tyrosine phosphatase that specifically dephosphorylates 'Tyr-142' of histone H2AX (H2AXY142ph). 'Tyr-142' phosphorylation of histone H2AX plays a central role in DNA repair and acts as a mark that distinguishes between apoptotic and repair responses to genotoxic stress. Promotes efficient DNA repair by dephosphorylating H2AX, promoting the recruitment of DNA repair complexes containing MDC1. Its function as histone phosphatase probably explains its role in transcription regulation during organogenesis. May be involved in development of the eye. The polypeptide is Protein phosphatase EYA4 (eya4) (Takifugu rubripes (Japanese pufferfish)).